The following is a 301-amino-acid chain: Multifunctional dioxygenase ausE (301 aa).

Residues arginine 72 and glutamine 127 each contribute to the substrate site. Fe cation is bound by residues histidine 130 and aspartate 132. Threonine 167 is a binding site for substrate. Histidine 214 lines the Fe cation pocket. Arginine 226 provides a ligand contact to substrate.

It belongs to the PhyH family. Homodimer. It depends on Fe cation as a cofactor.

It carries out the reaction preaustinoid A1 + 2-oxoglutarate + O2 = preaustinoid A2 + succinate + CO2 + H2O. It catalyses the reaction preaustinoid A2 + 2-oxoglutarate + O2 = preaustinoid A3 + succinate + CO2 + H2O. The catalysed reaction is berkeleyone A + 2-oxoglutarate + O2 = preaustinoid A + succinate + CO2 + H2O. It participates in secondary metabolite biosynthesis; terpenoid biosynthesis. Functionally, multifunctional dioxygenase; part of the gene cluster A that mediates the biosynthesis of the fungal meroterpenoid acetoxydehydroaustin. The first step of the pathway is the synthesis of 3,5-dimethylorsellinic acid by the polyketide synthase ausA. 3,5-dimethylorsellinic acid is then prenylated by the polyprenyl transferase ausN. Further epoxidation by the FAD-dependent monooxygenase ausM and cyclization by the probable terpene cyclase ausL lead to the formation of protoaustinoid A. Protoaustinoid A is then oxidized to spiro-lactone preaustinoid A3 by the combined action of the FAD-binding monooxygenases ausB and ausC, and the dioxygenase ausE. Acid-catalyzed keto-rearrangement and ring contraction of the tetraketide portion of preaustinoid A3 by ausJ lead to the formation of preaustinoid A4. The aldo-keto reductase ausK, with the help of ausH, is involved in the next step by transforming preaustinoid A4 into isoaustinone which is in turn hydroxylated by the P450 monooxygenase ausI to form austinolide. The cytochrome P450 monooxygenase ausG then modifies austinolide to austinol. Austinol is further acetylated to austin by the O-acetyltransferase ausP, which spontaneously changes to dehydroaustin. The cytochrome P450 monooxygenase then converts dehydroaustin is into 7-dehydrodehydroaustin. The hydroxylation catalyzed by ausR permits the second O-acetyltransferase ausQ to add an additional acetyl group to the molecule, leading to the formation of acetoxydehydroaustin. Due to genetic rearrangements of the clusters and the subsequent loss of some enzymes, the end product of the Penicillium brasilianum austinoid biosynthesis clusters is acetoxydehydroaustin. The protein is Multifunctional dioxygenase ausE of Penicillium brasilianum.